A 312-amino-acid chain; its full sequence is Aquaporin-6 (312 aa).

Topologically, residues 1 to 50 are cytoplasmic; it reads MDDKFDDDALPNSKTTAKDYEDKLPEYDYTTTFPNTWMRLREPFREYFAE. Residues 51 to 71 form a helical membrane-spanning segment; the sequence is FVGVAVLIIFGVGADCQVVLS. Residues 72–89 lie on the Extracellular side of the membrane; it reads ANTGVASSPKGSYLSLNC. Residues 90 to 110 traverse the membrane as a helical segment; sequence GWAIGTAMGVWISGGISGGHI. The NPA 1 motif lies at 111–113; that stretch reads NPA. At 111–128 the chain is on the cytoplasmic side; it reads NPAVTLAMATWRGFPWWK. A helical membrane pass occupies residues 129–149; the sequence is VPGFIFAQLLGGIVGAGLVYV. At 150-183 the chain is on the extracellular side; it reads NYIHAIDIVEGGRHIRTLDTAGLFATYAADYMTN. The N-linked (GlcNAc...) asparagine glycan is linked to N183. Residues 184–204 traverse the membrane as a helical segment; sequence LSCFFSEFLATAVLIIVIHAM. Over 205 to 213 the chain is Cytoplasmic; the sequence is NDKRNTPPP. Residues 214-234 traverse the membrane as a helical segment; sequence AGIVPFVLFFLILGIGASLGM. The Extracellular segment spans residues 235–267; sequence ETGYAINPARDLGPRMLTAMVGYGRQVFAFRNQ. Positions 241-243 match the NPA 2 motif; it reads NPA. Residues 268–288 traverse the membrane as a helical segment; sequence YWIWCPVLAPFLGAQVGTIFY. At 289-312 the chain is on the cytoplasmic side; it reads DLFFYKGQDNVFGRLGSHIHISPA.

Belongs to the MIP/aquaporin (TC 1.A.8) family.

It localises to the membrane. The enzyme catalyses H2O(in) = H2O(out). Water channel required to facilitate the transport of water across membranes. Does not mediate the transport carbon dioxide nor nitric oxide across the membrane. Plays a key role in root water transport of mycorrhizal plant such ectomycorrhizal white spruce or trembling aspen via the hydration at the hyphal-root interphase. Contributes in fungal cellular processes during the basidiocarp formation. This is Aquaporin-6 from Laccaria bicolor (Bicoloured deceiver).